The following is a 183-amino-acid chain: ATP synthase subunit b, chloroplastic (183 aa).

Residues 25-45 (DILATNLINLTVVVGVLIFFG) form a helical membrane-spanning segment.

This sequence belongs to the ATPase B chain family. F-type ATPases have 2 components, F(1) - the catalytic core - and F(0) - the membrane proton channel. F(1) has five subunits: alpha(3), beta(3), gamma(1), delta(1), epsilon(1). F(0) has four main subunits: a(1), b(1), b'(1) and c(10-14). The alpha and beta chains form an alternating ring which encloses part of the gamma chain. F(1) is attached to F(0) by a central stalk formed by the gamma and epsilon chains, while a peripheral stalk is formed by the delta, b and b' chains.

It localises to the plastid. It is found in the chloroplast thylakoid membrane. F(1)F(0) ATP synthase produces ATP from ADP in the presence of a proton or sodium gradient. F-type ATPases consist of two structural domains, F(1) containing the extramembraneous catalytic core and F(0) containing the membrane proton channel, linked together by a central stalk and a peripheral stalk. During catalysis, ATP synthesis in the catalytic domain of F(1) is coupled via a rotary mechanism of the central stalk subunits to proton translocation. In terms of biological role, component of the F(0) channel, it forms part of the peripheral stalk, linking F(1) to F(0). The polypeptide is ATP synthase subunit b, chloroplastic (Sorghum bicolor (Sorghum)).